The following is a 98-amino-acid chain: NADH-ubiquinone oxidoreductase chain 4L (98 aa).

The next 3 helical transmembrane spans lie at 1–21, 29–49, and 61–81; these read MSLT…GLLM, ALLC…ITIL, and IILL…LVMV.

This sequence belongs to the complex I subunit 4L family. In terms of assembly, core subunit of respiratory chain NADH dehydrogenase (Complex I) which is composed of 45 different subunits.

It localises to the mitochondrion inner membrane. The enzyme catalyses a ubiquinone + NADH + 5 H(+)(in) = a ubiquinol + NAD(+) + 4 H(+)(out). Its function is as follows. Core subunit of the mitochondrial membrane respiratory chain NADH dehydrogenase (Complex I) which catalyzes electron transfer from NADH through the respiratory chain, using ubiquinone as an electron acceptor. Part of the enzyme membrane arm which is embedded in the lipid bilayer and involved in proton translocation. This is NADH-ubiquinone oxidoreductase chain 4L (MT-ND4L) from Rhinophylla pumilio (Dwarf little fruit bat).